Consider the following 138-residue polypeptide: Small ribosomal subunit protein uS11c (138 aa).

A disordered region spans residues 1–22 (MAKPIPRIGSQRNRRINSRKNA). The segment covering 12–22 (RNRRINSRKNA) has biased composition (basic residues).

Belongs to the universal ribosomal protein uS11 family. Part of the 30S ribosomal subunit.

Its subcellular location is the plastid. It localises to the chloroplast. The protein is Small ribosomal subunit protein uS11c of Fagopyrum esculentum subsp. ancestrale (Wild buckwheat).